The primary structure comprises 208 residues: FAS-associated death domain protein (208 aa).

The 79-residue stretch at 3–81 folds into the DED domain; the sequence is PFLVLLHSVS…RHDLLRRVDD (79 aa). The region spanning 97–181 is the Death domain; sequence LCAAFNVICD…LVADLVQEVQ (85 aa). A (Microbial infection) N-beta-linked (GlcNAc) arginine glycan is attached at arginine 117. A disordered region spans residues 187–208; it reads QNRSGAMSPMSWNSDASTSEAS. Serine 194 bears the Phosphoserine mark.

In terms of assembly, can self-associate. Component of the AIM2 PANoptosome complex, a multiprotein complex that drives inflammatory cell death (PANoptosis). Component of the death-induced signaling complex (DISC) composed of cell surface receptor FAS/CD95 or TNFRSF1A, adapter protein FADD and the CASP8 protease; recruitment of CASP8 to the complex is required for processing of CASP8 into the p18 and p10 subunits. Interacts (via death domain) with FAS (via death domain). Interacts directly (via DED domain) with NOL3 (via CARD domain); inhibits death-inducing signaling complex (DISC) assembly by inhibiting the increase in FAS-FADD binding induced by FAS activation. Interacts with CFLAR, PEA15 and MBD4. When phosphorylated, part of a complex containing HIPK3 and FAS. May interact with MAVS/IPS1. Interacts with MOCV v-CFLAR protein and PIDD1. Interacts with RIPK1 and TRADD. Interacts with stimulated TNFRSF10B. Interacts with DDX24. (Microbial infection) Interacts with human papillomavirus 16/HPV16 protein E6. As to quaternary structure, (Microbial infection) Interacts with molluscum contagiosum virus proteins MC159L/v-CFLAR and MC160L. (Microbial infection) Glycosylated at Arg-117 by enteropathogenic E.coli protein NleB1, C.rodentium protein NleB and S.typhimurium protein Ssek1: arginine GlcNAcylation prevents recruitment of caspase-8 or caspase-10 to the activated Fas (CD95) or TNFR-1 receptors. As to expression, expressed in a wide variety of tissues, except for peripheral blood mononuclear leukocytes.

Its subcellular location is the cytoplasm. Functionally, apoptotic adapter molecule that recruits caspases CASP8 or CASP10 to the activated FAS/CD95 or TNFRSF1A/TNFR-1 receptors. The resulting aggregate called the death-inducing signaling complex (DISC) performs CASP8 proteolytic activation. Active CASP8 initiates the subsequent cascade of caspases mediating apoptosis. Involved in interferon-mediated antiviral immune response, playing a role in the positive regulation of interferon signaling. The chain is FAS-associated death domain protein from Homo sapiens (Human).